The primary structure comprises 168 residues: Sensor histidine kinase component HK1 (168 aa).

The Histidine kinase; second part domain maps to 1–141 (MPITPLLHES…ELRITLPTPR (141 aa)). A disordered region spans residues 137 to 168 (LPTPRPPFHEELPRITSSDTKDPNREHDTSDQ). A compositionally biased stretch (basic and acidic residues) spans 143-168 (PFHEELPRITSSDTKDPNREHDTSDQ).

Interacts with HK2.

The enzyme catalyses ATP + protein L-histidine = ADP + protein N-phospho-L-histidine.. In terms of biological role, member of the three-protein two-component system HK1/HK2/TcrA. Kinase that binds ATP and catalyzes the transfer of a phosphoryl group from ATP to HK2. The polypeptide is Sensor histidine kinase component HK1 (Mycobacterium tuberculosis (strain ATCC 25618 / H37Rv)).